Reading from the N-terminus, the 747-residue chain is Pyrin (747 aa).

Residues 1-92 enclose the Pyrin domain; sequence MANTRVDHLL…AEELHKATGP (92 aa). The disordered stretch occupies residues 89–181; sequence ATGPEHLTEE…GARSAAPLYR (93 aa). A compositionally biased stretch (acidic residues) spans 122–135; sequence PGEDEAQQNDDESD. Residues Cys-442, His-445, Cys-465, and His-471 each contribute to the Zn(2+) site. Residues 442–479 form a B box-type zinc finger; the sequence is CPRHMKQVQLLFCEDHREPICLICRLSQEHQGHRVRPI. Residues 479-508 are a coiled coil; the sequence is IEEAALQYKEQIRKQLERLREMRGYVEEHK. The required for homotrimerization and induction of pyroptosomes stretch occupies residues 487–645; sequence KEQIRKQLER…RFSEMLGSEM (159 aa). The interval 698 to 720 is disordered; that stretch reads EPQDYLHPSSAQDTPELHEIHSQ.

As to quaternary structure, homotrimer. Interacts (via the B box-type zinc finger) with PSTPIP1. Interacts (via the B30.2/SPRY domain) with several components of the inflammasome complex, including CASP1 p20 and p10 subunits, CASP5, PYCARD, NLRP1, NLRP2 and NLRP3, as well as with unprocessed IL1B; this interaction may lead to autophagic degradation of these proteins. Component of the AIM2 PANoptosome complex, a multiprotein complex that drives inflammatory cell death (PANoptosis). Interacts with NFKBIA and RELA. Interacts weakly with VASP and ACTR3. Interacts with active ULK1 (phosphorylated on 'Ser-317') and BECN1 simultaneously. Also interacts with ATG16L1 (via WD repeats), and with ATG8 family members, including GABARAP, GABARAPL1 and, to a lesser extent, GABARAPL2, MAP1LC3A/LC3A and MAP1LC3C/LC3C. Interacts with TRIM21. Interacts with YWHAB, YWHAE, YWHAG, YWHAH, YWHAQ and YWHAZ; the interaction is required for the down-regulation of pyrin pro-inflammatory activity. Post-translationally, degraded along with the delivery of its substrates to autolysosomal compartments (at protein level). In terms of tissue distribution, expressed in spleen and, to a lesser degree in the lung. Not expressed in thymus, testis, ovary, heart, brain, liver, kidney and muscle.

The protein localises to the cytoplasm. Its subcellular location is the cytoskeleton. The protein resides in the cell projection. It localises to the ruffle. It is found in the lamellipodium. The protein localises to the cytoplasmic vesicle. Its subcellular location is the autophagosome. The protein resides in the nucleus. Functionally, involved in the regulation of innate immunity and the inflammatory response in response to IFNG/IFN-gamma. Organizes autophagic machinery by serving as a platform for the assembly of ULK1, Beclin 1/BECN1, ATG16L1, and ATG8 family members and recognizes specific autophagy targets, thus coordinating target recognition with assembly of the autophagic apparatus and initiation of autophagy. Acts as an autophagy receptor for the degradation of several inflammasome components, including CASP1, NLRP1 and NLRP3, hence preventing excessive IL1B- and IL18-mediated inflammation. However, it can also have a positive effect in the inflammatory pathway, acting as an innate immune sensor that triggers PYCARD/ASC specks formation, caspase-1 activation, and IL1B and IL18 production. Together with AIM2, also acts as a mediator of pyroptosis, necroptosis and apoptosis (PANoptosis), an integral part of host defense against pathogens, in response to bacterial infection. It is required for PSTPIP1-induced PYCARD/ASC oligomerization and inflammasome formation. Recruits PSTPIP1 to inflammasomes, and is required for PSTPIP1 oligomerization. The polypeptide is Pyrin (Rattus norvegicus (Rat)).